Consider the following 483-residue polypeptide: Probable cytosol aminopeptidase (483 aa).

The Mn(2+) site is built by Lys-252 and Asp-257. Lys-264 is an active-site residue. Asp-275, Asp-334, and Glu-336 together coordinate Mn(2+). The active site involves Arg-338.

The protein belongs to the peptidase M17 family. Mn(2+) is required as a cofactor.

It is found in the cytoplasm. It carries out the reaction Release of an N-terminal amino acid, Xaa-|-Yaa-, in which Xaa is preferably Leu, but may be other amino acids including Pro although not Arg or Lys, and Yaa may be Pro. Amino acid amides and methyl esters are also readily hydrolyzed, but rates on arylamides are exceedingly low.. It catalyses the reaction Release of an N-terminal amino acid, preferentially leucine, but not glutamic or aspartic acids.. Presumably involved in the processing and regular turnover of intracellular proteins. Catalyzes the removal of unsubstituted N-terminal amino acids from various peptides. This chain is Probable cytosol aminopeptidase, found in Legionella pneumophila (strain Paris).